The chain runs to 488 residues: Glutamate--tRNA ligase (488 aa).

The 'HIGH' region signature appears at 8–18; the sequence is PSPTGPLHIGG. Residues Cys-105, Cys-107, Cys-132, and His-134 each coordinate Zn(2+). The short motif at 249-253 is the 'KMSKS' region element; the sequence is KMSKR. Lys-252 contacts ATP.

Belongs to the class-I aminoacyl-tRNA synthetase family. Glutamate--tRNA ligase type 1 subfamily. Monomer. It depends on Zn(2+) as a cofactor.

It localises to the cytoplasm. The catalysed reaction is tRNA(Glu) + L-glutamate + ATP = L-glutamyl-tRNA(Glu) + AMP + diphosphate. Catalyzes the attachment of glutamate to tRNA(Glu) in a two-step reaction: glutamate is first activated by ATP to form Glu-AMP and then transferred to the acceptor end of tRNA(Glu). This Desulfitobacterium hafniense (strain Y51) protein is Glutamate--tRNA ligase.